The primary structure comprises 92 residues: Small ribosomal subunit protein uS19 (92 aa).

It belongs to the universal ribosomal protein uS19 family.

Functionally, protein S19 forms a complex with S13 that binds strongly to the 16S ribosomal RNA. The chain is Small ribosomal subunit protein uS19 from Trichlorobacter lovleyi (strain ATCC BAA-1151 / DSM 17278 / SZ) (Geobacter lovleyi).